The primary structure comprises 299 residues: Protease HtpX homolog (299 aa).

A run of 2 helical transmembrane segments spans residues 14-34 and 39-59; these read WLLL…VGNL and GFGG…TMIF. Histidine 143 is a Zn(2+) binding site. Residue glutamate 144 is part of the active site. Residue histidine 147 participates in Zn(2+) binding. A run of 2 helical transmembrane segments spans residues 153–173 and 198–218; these read IRIS…AGMA and IVFL…ATLV. Glutamate 227 serves as a coordination point for Zn(2+).

Belongs to the peptidase M48B family. The cofactor is Zn(2+).

The protein localises to the cell membrane. This is Protease HtpX homolog from Streptococcus thermophilus (strain ATCC BAA-250 / LMG 18311).